Here is a 396-residue protein sequence, read N- to C-terminus: Arginine biosynthesis bifunctional protein ArgJ (396 aa).

Substrate is bound by residues Thr150, Lys177, Thr188, Glu267, Asn391, and Thr396. The Nucleophile role is filled by Thr188.

It belongs to the ArgJ family. In terms of assembly, heterotetramer of two alpha and two beta chains.

The protein resides in the cytoplasm. The enzyme catalyses N(2)-acetyl-L-ornithine + L-glutamate = N-acetyl-L-glutamate + L-ornithine. The catalysed reaction is L-glutamate + acetyl-CoA = N-acetyl-L-glutamate + CoA + H(+). Its pathway is amino-acid biosynthesis; L-arginine biosynthesis; L-ornithine and N-acetyl-L-glutamate from L-glutamate and N(2)-acetyl-L-ornithine (cyclic): step 1/1. It participates in amino-acid biosynthesis; L-arginine biosynthesis; N(2)-acetyl-L-ornithine from L-glutamate: step 1/4. Catalyzes two activities which are involved in the cyclic version of arginine biosynthesis: the synthesis of N-acetylglutamate from glutamate and acetyl-CoA as the acetyl donor, and of ornithine by transacetylation between N(2)-acetylornithine and glutamate. The sequence is that of Arginine biosynthesis bifunctional protein ArgJ from Wolinella succinogenes (strain ATCC 29543 / DSM 1740 / CCUG 13145 / JCM 31913 / LMG 7466 / NCTC 11488 / FDC 602W) (Vibrio succinogenes).